Here is a 390-residue protein sequence, read N- to C-terminus: UDP-galactose translocator (390 aa).

The tract at residues 1 to 24 (MAAVGVGGSTAAAGAGAVSSGALE) is disordered. A run of 10 helical transmembrane segments spans residues 3 to 23 (AVGV…SGAL), 37 to 57 (YISL…IRYA), 65 to 85 (FFAT…CLLL), 97 to 117 (LVLF…KLAV), 140 to 160 (TFQV…VLML), 169 to 189 (WASL…QAGG), 200 to 220 (GAGL…GVYF), 238 to 258 (LGLF…GTAV), 269 to 289 (PAVW…AVVV), and 315 to 335 (LFGF…IGAV). Residues 9–22 (STAAAGAGAVSSGA) show a composition bias toward low complexity. A disordered region spans residues 356–390 (PCIHQQPPGQPPPPQLSSRGDLTTEPFLPKSVLVK).

Belongs to the nucleotide-sugar transporter family. SLC35A subfamily. As to quaternary structure, interacts with SLC35A3; the interaction is reduced in the presence of SLC35A4. Found in a complex with SLC35A3 and SLC35A4.

The protein resides in the golgi apparatus membrane. The enzyme catalyses UMP(out) + UDP-alpha-D-galactose(in) = UMP(in) + UDP-alpha-D-galactose(out). It catalyses the reaction UDP-N-acetyl-alpha-D-galactosamine(in) + UMP(out) = UDP-N-acetyl-alpha-D-galactosamine(out) + UMP(in). The catalysed reaction is UMP(out) + UDP-alpha-D-glucose(in) = UMP(in) + UDP-alpha-D-glucose(out). It carries out the reaction UMP(out) + UDP-N-acetyl-alpha-D-glucosamine(in) = UMP(in) + UDP-N-acetyl-alpha-D-glucosamine(out). The enzyme catalyses UDP-alpha-D-galactose(in) + AMP(out) = UDP-alpha-D-galactose(out) + AMP(in). It catalyses the reaction UDP-alpha-D-galactose(in) + CMP(out) = UDP-alpha-D-galactose(out) + CMP(in). The catalysed reaction is UDP-N-acetyl-alpha-D-galactosamine(out) + UDP-alpha-D-galactose(in) = UDP-N-acetyl-alpha-D-galactosamine(in) + UDP-alpha-D-galactose(out). It carries out the reaction UDP-N-acetyl-alpha-D-glucosamine(out) + UDP-alpha-D-galactose(in) = UDP-N-acetyl-alpha-D-glucosamine(in) + UDP-alpha-D-galactose(out). The enzyme catalyses UDP-alpha-D-galactose(in) + UDP-alpha-D-glucose(out) = UDP-alpha-D-galactose(out) + UDP-alpha-D-glucose(in). It catalyses the reaction UMP(out) + CMP(in) = UMP(in) + CMP(out). The catalysed reaction is UMP(out) + AMP(in) = UMP(in) + AMP(out). Functionally, transports uridine diphosphate galactose (UDP-galactose) from the cytosol into the Golgi apparatus. It functions as an antiporter that exchanges UDP-galactose for UMP. It is also able to exchange UDP-galactose for AMP and CMP, and to transport UDP-N-acetylgalactosamine (UDP-GalNAc) and other nucleotide sugars. As a provider of UDP-galactose to galactosyltransferases present in the Golgi apparatus, it is necessary for globotriaosylceramide/globoside (Gb3Cer) synthesis from lactosylceramide. This Mus musculus (Mouse) protein is UDP-galactose translocator.